The chain runs to 201 residues: Cerebellin-4 (201 aa).

Positions 1–27 are cleaved as a signal peptide; the sequence is MGSGRRALSAVPAVLLVLTLPGLPVWA. 2 N-linked (GlcNAc...) asparagine glycosylation sites follow: N29 and N88. Residues 66-201 enclose the C1q domain; sequence AANSKVAFSA…TFSGFLVFPL (136 aa).

In terms of assembly, homohexamer; disulfide-linked homotrimers. The trimers are assembled via the globular C1q domains. The trimers associate via N-terminal cysteine residues to form disulfide-linked hexamers. May form oligomers with CBLN1, CBLN2 and CBLN3 prior to secretion. Strongly interacts with DCC in a NTN1-displaceable fashion. Weakly binds to NRXN1 and NRXN2 long and short isoforms produced by alternative promoter usage. Interaction with NRXN3 short isoform is hardly detectable; no interaction at all with NRXN3 long isoform. Post-translationally, sialoglycoprotein.

Its subcellular location is the secreted. It is found in the synapse. In terms of biological role, acts as a synaptic organizer in specific subsets of neurons in the brain. Essential for the formation and maintenance of inhibitory GABAergic synapses. Promotes the development of dendrite-targeting inhibitory GABAergic synapses made by somatostatin-positive interneurons. May contribute to the function of ventral medial habenula region of the brain implicated in the regulation of anxiety-related behaviors. May play a role in CBLN3 export from the endoplasmic reticulum and secretion. This is Cerebellin-4 (CBLN4) from Homo sapiens (Human).